We begin with the raw amino-acid sequence, 146 residues long: Neutral phospholipase A2 B (146 aa).

A signal peptide spans methionine 1–serine 21. Positions asparagine 22–leucine 27 are excised as a propeptide. 7 cysteine pairs are disulfide-bonded: cysteine 38–cysteine 98, cysteine 53–cysteine 145, cysteine 55–cysteine 71, cysteine 70–cysteine 126, cysteine 77–cysteine 119, cysteine 87–cysteine 112, and cysteine 105–cysteine 117. Residues tyrosine 54, glycine 56, and glycine 58 each contribute to the Ca(2+) site. Histidine 74 is an active-site residue. Aspartate 75 contacts Ca(2+). The active site involves aspartate 120.

The protein belongs to the phospholipase A2 family. Group I subfamily. D49 sub-subfamily. It depends on Ca(2+) as a cofactor. In terms of tissue distribution, expressed by the venom gland.

The protein localises to the secreted. The catalysed reaction is a 1,2-diacyl-sn-glycero-3-phosphocholine + H2O = a 1-acyl-sn-glycero-3-phosphocholine + a fatty acid + H(+). Its function is as follows. PLA2 catalyzes the calcium-dependent hydrolysis of the 2-acyl groups in 3-sn-phosphoglycerides. The sequence is that of Neutral phospholipase A2 B from Naja sputatrix (Malayan spitting cobra).